Here is a 20-residue protein sequence, read N- to C-terminus: Hemocyanin subunit Ia (20 aa).

The interval 1 to 20 (ADXQPGDSTDKLLAQKQDDV) is disordered.

It belongs to the tyrosinase family. Hemocyanin subfamily. As to quaternary structure, composed of 3 major subunits (IB, II and III) and 1 minor subunit (IA) which form homohexamers and heterohexamers. May also form larger structures. In terms of tissue distribution, hemolymph.

Its subcellular location is the secreted. The protein localises to the extracellular space. Functionally, hemocyanins are copper-containing oxygen carriers occurring freely dissolved in the hemolymph of many mollusks and arthropods. The sequence is that of Hemocyanin subunit Ia from Panulirus japonicus (Japanese spiny lobster).